A 1004-amino-acid polypeptide reads, in one-letter code: 2-oxoglutarate dehydrogenase E1 component (1004 aa).

This sequence belongs to the alpha-ketoglutarate dehydrogenase family. Homodimer. Part of the 2-oxoglutarate dehydrogenase (OGDH) complex composed of E1 (2-oxoglutarate dehydrogenase), E2 (dihydrolipoamide succinyltransferase) and E3 (dihydrolipoamide dehydrogenase); the complex contains multiple copies of the three enzymatic components (E1, E2 and E3). Requires thiamine diphosphate as cofactor.

It carries out the reaction N(6)-[(R)-lipoyl]-L-lysyl-[protein] + 2-oxoglutarate + H(+) = N(6)-[(R)-S(8)-succinyldihydrolipoyl]-L-lysyl-[protein] + CO2. In terms of biological role, E1 component of the 2-oxoglutarate dehydrogenase (OGDH) complex which catalyzes the decarboxylation of 2-oxoglutarate, the first step in the conversion of 2-oxoglutarate to succinyl-CoA and CO(2). The sequence is that of 2-oxoglutarate dehydrogenase E1 component from Brucella suis (strain ATCC 23445 / NCTC 10510).